Here is a 120-residue protein sequence, read N- to C-terminus: Anti-adapter protein IraM (120 aa).

The protein belongs to the IraM/RssC family.

It localises to the cytoplasm. Its function is as follows. Involved in the stabilization of the sigma stress factor RpoS. The protein is Anti-adapter protein IraM of Salmonella typhimurium (strain LT2 / SGSC1412 / ATCC 700720).